A 529-amino-acid polypeptide reads, in one-letter code: Apolipoprotein N-acyltransferase (529 aa).

The next 5 helical transmembrane spans lie at V8–A28, I66–W86, L105–A125, L178–I198, and G203–F223. Positions V242–G491 constitute a CN hydrolase domain. The active-site Proton acceptor is E286. The active site involves K350. The Nucleophile role is filled by C403. A helical transmembrane segment spans residues Y505–A525.

It belongs to the CN hydrolase family. Apolipoprotein N-acyltransferase subfamily.

It localises to the cell inner membrane. It catalyses the reaction N-terminal S-1,2-diacyl-sn-glyceryl-L-cysteinyl-[lipoprotein] + a glycerophospholipid = N-acyl-S-1,2-diacyl-sn-glyceryl-L-cysteinyl-[lipoprotein] + a 2-acyl-sn-glycero-3-phospholipid + H(+). Its pathway is protein modification; lipoprotein biosynthesis (N-acyl transfer). In terms of biological role, catalyzes the phospholipid dependent N-acylation of the N-terminal cysteine of apolipoprotein, the last step in lipoprotein maturation. The sequence is that of Apolipoprotein N-acyltransferase from Agrobacterium fabrum (strain C58 / ATCC 33970) (Agrobacterium tumefaciens (strain C58)).